The chain runs to 168 residues: Oleosin 18.2 kDa (168 aa).

Alanine 2 carries the N-acetylalanine modification. The interval 2–45 (AEVRDRNLPHQVQVHPQYRLDNTTGGGYGAKNYHSGPSTSQVLA) is polar. 3 helical membrane-spanning segments follow: residues 43 to 63 (VLAVLTLLPIGGTLLALAGLT), 76 to 96 (PLFIIFSPVLVPAAIAIAMAV), and 97 to 117 (TGFLSSGAFGLTGLSSLSYVL). The hydrophobic stretch occupies residues 46 to 117 (VLTLLPIGGT…TGLSSLSYVL (72 aa)).

This sequence belongs to the oleosin family.

It is found in the lipid droplet. Its subcellular location is the membrane. Its function is as follows. May have a structural role to stabilize the lipid body during desiccation of the seed by preventing coalescence of the oil. Probably interacts with both lipid and phospholipid moieties of lipid bodies. May also provide recognition signals for specific lipase anchorage in lipolysis during seedling growth. This is Oleosin 18.2 kDa (MATP6-A) from Gossypium hirsutum (Upland cotton).